The primary structure comprises 201 residues: Histone-like protein HC2 (201 aa).

Residues 1–69 (MLGVQKKCST…VAKKATAKKA (69 aa)) form a disordered region. 2 stretches are compositionally biased toward basic residues: residues 8 to 50 (CSTR…KTVA) and 59 to 69 (PVAKKATAKKA).

This sequence belongs to the histone H1/H5 family. HCT subfamily.

Might have a role in establishing the nucleoid structure of elementary bodies. In Chlamydia trachomatis serovar D (strain ATCC VR-885 / DSM 19411 / UW-3/Cx), this protein is Histone-like protein HC2 (hctB).